A 477-amino-acid polypeptide reads, in one-letter code: Ribulose bisphosphate carboxylase large chain (477 aa).

Residues 1–2 constitute a propeptide that is removed on maturation; that stretch reads MS. Proline 3 is modified (N-acetylproline). N6,N6,N6-trimethyllysine is present on lysine 14. 2 residues coordinate substrate: asparagine 123 and threonine 173. Lysine 175 (proton acceptor) is an active-site residue. Lysine 177 serves as a coordination point for substrate. Mg(2+) is bound by residues lysine 201, aspartate 203, and glutamate 204. N6-carboxylysine is present on lysine 201. The active-site Proton acceptor is the histidine 294. Residues arginine 295, histidine 327, and serine 379 each contribute to the substrate site.

Belongs to the RuBisCO large chain family. Type I subfamily. In terms of assembly, heterohexadecamer of 8 large chains and 8 small chains; disulfide-linked. The disulfide link is formed within the large subunit homodimers. It depends on Mg(2+) as a cofactor. Post-translationally, the disulfide bond which can form in the large chain dimeric partners within the hexadecamer appears to be associated with oxidative stress and protein turnover.

It localises to the plastid. Its subcellular location is the chloroplast. It catalyses the reaction 2 (2R)-3-phosphoglycerate + 2 H(+) = D-ribulose 1,5-bisphosphate + CO2 + H2O. The catalysed reaction is D-ribulose 1,5-bisphosphate + O2 = 2-phosphoglycolate + (2R)-3-phosphoglycerate + 2 H(+). Functionally, ruBisCO catalyzes two reactions: the carboxylation of D-ribulose 1,5-bisphosphate, the primary event in carbon dioxide fixation, as well as the oxidative fragmentation of the pentose substrate in the photorespiration process. Both reactions occur simultaneously and in competition at the same active site. The sequence is that of Ribulose bisphosphate carboxylase large chain from Dioscorea elephantipes (Elephant's foot yam).